We begin with the raw amino-acid sequence, 383 residues long: Alkanesulfonate monooxygenase (383 aa).

This sequence belongs to the SsuD family. As to quaternary structure, homotetramer.

It catalyses the reaction an alkanesulfonate + FMNH2 + O2 = an aldehyde + FMN + sulfite + H2O + 2 H(+). Catalyzes the desulfonation of aliphatic sulfonates. In Erwinia pyrifoliae (strain DSM 12163 / CIP 106111 / Ep16/96), this protein is Alkanesulfonate monooxygenase.